A 385-amino-acid chain; its full sequence is GTPase Obg (385 aa).

The region spanning 1 to 159 (MKFVDEVEIR…RNLKLELLLL (159 aa)) is the Obg domain. Residues 160 to 333 (ADVGLLGLPN…LIHDVMTLLE (174 aa)) enclose the OBG-type G domain. Residues 166-173 (GLPNAGKS), 191-195 (FTTLI), 213-216 (DIPG), 283-286 (NKID), and 314-316 (SAI) each bind GTP. Residues Ser173 and Thr193 each contribute to the Mg(2+) site.

The protein belongs to the TRAFAC class OBG-HflX-like GTPase superfamily. OBG GTPase family. As to quaternary structure, monomer. Mg(2+) is required as a cofactor.

Its subcellular location is the cytoplasm. Functionally, an essential GTPase which binds GTP, GDP and possibly (p)ppGpp with moderate affinity, with high nucleotide exchange rates and a fairly low GTP hydrolysis rate. Plays a role in control of the cell cycle, stress response, ribosome biogenesis and in those bacteria that undergo differentiation, in morphogenesis control. In Pseudoalteromonas translucida (strain TAC 125), this protein is GTPase Obg.